The sequence spans 348 residues: Protein RecA (348 aa).

66-73 lines the ATP pocket; it reads GPESSGKT.

Belongs to the RecA family.

Its subcellular location is the cytoplasm. Can catalyze the hydrolysis of ATP in the presence of single-stranded DNA, the ATP-dependent uptake of single-stranded DNA by duplex DNA, and the ATP-dependent hybridization of homologous single-stranded DNAs. It interacts with LexA causing its activation and leading to its autocatalytic cleavage. The polypeptide is Protein RecA (Legionella pneumophila (strain Paris)).